Consider the following 402-residue polypeptide: Phosphoglycerate kinase (402 aa).

Substrate-binding positions include 24-26, Arg-40, 63-66, Arg-122, and Arg-155; these read DFN and HFGR. ATP is bound by residues Lys-206, Gly-297, Glu-328, and 358–361; that span reads GGDS.

This sequence belongs to the phosphoglycerate kinase family. Monomer.

It localises to the cytoplasm. It carries out the reaction (2R)-3-phosphoglycerate + ATP = (2R)-3-phospho-glyceroyl phosphate + ADP. The protein operates within carbohydrate degradation; glycolysis; pyruvate from D-glyceraldehyde 3-phosphate: step 2/5. The chain is Phosphoglycerate kinase from Prochlorococcus marinus (strain AS9601).